Here is a 585-residue protein sequence, read N- to C-terminus: Archaeosine synthase (585 aa).

The PUA domain occupies 516-584 (TKTVEIDGFV…IGVEIRHVEE (69 aa)).

Belongs to the archaeosine synthase type 1 family. As to quaternary structure, homodimer.

It carries out the reaction 7-cyano-7-carbaguanosine(15) in tRNA + L-glutamine + H2O = archaeosine(15) in tRNA + L-glutamate. It functions in the pathway tRNA modification; archaeosine-tRNA biosynthesis. Is responsible for the final step in the biosynthesis of archaeosine, a modified nucleoside present in the dihydrouridine loop (D-loop) of archaeal tRNA. Catalyzes the conversion of 7-cyano-7-deazaguanine (preQ0)-modified tRNA to archaeosine-tRNA, transforming a nitrile group to a formamidine group. This chain is Archaeosine synthase, found in Haloferax volcanii (strain ATCC 29605 / DSM 3757 / JCM 8879 / NBRC 14742 / NCIMB 2012 / VKM B-1768 / DS2) (Halobacterium volcanii).